The chain runs to 72 residues: Large ribosomal subunit protein bL31c (72 aa).

The protein belongs to the bacterial ribosomal protein bL31 family. Type A subfamily. In terms of assembly, part of the 50S ribosomal subunit.

It localises to the plastid. The protein localises to the chloroplast. Its function is as follows. Binds the 23S rRNA. In Guillardia theta (Cryptophyte), this protein is Large ribosomal subunit protein bL31c.